Consider the following 633-residue polypeptide: Kinesin-like motor protein 9 (633 aa).

Residues 1-392 enclose the Kinesin motor domain; that stretch reads MIQIFLRVKK…MRYSANAREI (392 aa). Position 94–101 (94–101) interacts with ATP; the sequence is GVSGAGKT. Disordered regions lie at residues 393-423, 531-556, and 575-633; these read LPPPLNENSGSQSPSHSLLQKSKNTSSTKAL, LEEESIKESSATQQNENQHKRSSRKL, and KLWP…INEL. The span at 398–423 shows a compositional bias: polar residues; sequence NENSGSQSPSHSLLQKSKNTSSTKAL. Residues 417-541 are a coiled coil; sequence TSSTKALTSH…EEESIKESSA (125 aa). Residues 578 to 587 show a composition bias toward polar residues; that stretch reads PQSTLIQAPN. Over residues 604-623 the composition is skewed to low complexity; it reads VSPIKPLSPSRRPPLTSLYS. 3 positions are modified to phosphoserine: S605, S611, and S613. Over residues 624–633 the composition is skewed to polar residues; sequence GTTDIDINEL.

It belongs to the TRAFAC class myosin-kinesin ATPase superfamily. Kinesin family. As to quaternary structure, interacts with ase1. Post-translationally, phosphorylated by cdc2 and dephosphorylated by clp1. Dephosphorylation is required for the interaction with ase1.

It is found in the nucleus. The protein localises to the cytoplasm. Its subcellular location is the cytoskeleton. The protein resides in the microtubule organizing center. It localises to the spindle pole body. Kinesin-like motor protein involved in anaphase B spindle elongation. This is Kinesin-like motor protein 9 (klp9) from Schizosaccharomyces pombe (strain 972 / ATCC 24843) (Fission yeast).